The primary structure comprises 1522 residues: Paired amphipathic helix protein pst1 (1522 aa).

Residues 139-174 (TILSSTDSNIPRPGTVKSSASPFVPNQNPSAPPPPP) are disordered. Residues 178-248 (RQLNVTDALS…QGFNTFLPPG (71 aa)) enclose the PAH 1 domain. A disordered region spans residues 307 to 339 (QSSASHPVLQPPAPSTLQFNPSPSPAAPSYPPV). Positions 328-337 (SPSPAAPSYP) are enriched in pro residues. One can recognise a PAH 2 domain in the interval 345-415 (QAADLDQAIN…EEFKRFLPDV (71 aa)). 3 disordered regions span residues 422-504 (ETQD…AFNV), 928-968 (AREN…DESS), and 1343-1522 (SGKA…KDDL). Positions 426-441 (KSTVVPQESATATPKR) are enriched in polar residues. A Phosphoserine modification is found at S442. Residues 442-468 (SPSATPTSALPPIGKFAPPTTAKAQPA) are compositionally biased toward low complexity. Position 446 is a phosphothreonine (T446). The 73-residue stretch at 504 to 576 (VPIAQNKNPS…NWLKDLVKYN (73 aa)) folds into the PAH 3 domain. Over residues 928–960 (ARENRSSVKEDYVSESTERTPDASEIDEHISEH) the composition is skewed to basic and acidic residues. The span at 1385–1398 (GKSSVTRGNKTNLK) shows a compositional bias: polar residues. Residues 1403–1432 (RNNDDSSNKINLSEKEKEKESIEDEEKNRE) show a composition bias toward basic and acidic residues. At S1443 the chain carries Phosphoserine. Basic and acidic residues predominate over residues 1461–1474 (TSSHRPERSSEKKS). Residues 1478–1487 (VFTSVKQTAE) show a composition bias toward polar residues. Over residues 1488–1522 (NDADNEDDKTDMDDQTEETLDADNTMEEEPSKDDL) the composition is skewed to acidic residues.

Its subcellular location is the nucleus. Functionally, has a role in modulating the nuclear import of TF1 virus-like particles. Essential for viability. The chain is Paired amphipathic helix protein pst1 (pst1) from Schizosaccharomyces pombe (strain 972 / ATCC 24843) (Fission yeast).